The sequence spans 802 residues: Leucine--tRNA ligase (802 aa).

The 'HIGH' region motif lies at 40 to 51 (PYPSGAGLHVGH). The 'KMSKS' region signature appears at 576–580 (KMSKS). Lys-579 is a binding site for ATP.

This sequence belongs to the class-I aminoacyl-tRNA synthetase family.

The protein localises to the cytoplasm. The enzyme catalyses tRNA(Leu) + L-leucine + ATP = L-leucyl-tRNA(Leu) + AMP + diphosphate. The sequence is that of Leucine--tRNA ligase from Bacillus mycoides (strain KBAB4) (Bacillus weihenstephanensis).